A 186-amino-acid chain; its full sequence is Elongation factor P (186 aa).

This sequence belongs to the elongation factor P family.

Its subcellular location is the cytoplasm. It participates in protein biosynthesis; polypeptide chain elongation. Its function is as follows. Involved in peptide bond synthesis. Stimulates efficient translation and peptide-bond synthesis on native or reconstituted 70S ribosomes in vitro. Probably functions indirectly by altering the affinity of the ribosome for aminoacyl-tRNA, thus increasing their reactivity as acceptors for peptidyl transferase. This chain is Elongation factor P, found in Neisseria gonorrhoeae (strain ATCC 700825 / FA 1090).